Here is a 263-residue protein sequence, read N- to C-terminus: Chromosomal replication initiator protein DnaA (263 aa).

Position 1 (glutamate 1) is a region of interest, domain I, interacts with DnaA modulators. Position 1 (glutamate 1) is a region of interest, domain II. The domain III, AAA+ region stretch occupies residues 1-179; the sequence is ESGMGKTHLL…GSVSRLNFWS (179 aa). Residues glycine 3, glycine 5, lysine 6, and threonine 7 each coordinate ATP. The interval 180–263 is domain IV, binds dsDNA; sequence QQNPEEKIIT…HTLAQIGEEF (84 aa).

It belongs to the DnaA family. Oligomerizes as a right-handed, spiral filament on DNA at oriC.

The protein localises to the cytoplasm. In terms of biological role, plays an essential role in the initiation and regulation of chromosomal replication. ATP-DnaA binds to the origin of replication (oriC) to initiate formation of the DNA replication initiation complex once per cell cycle. Binds the DnaA box (a 9 base pair repeat at the origin) and separates the double-stranded (ds)DNA. Forms a right-handed helical filament on oriC DNA; dsDNA binds to the exterior of the filament while single-stranded (ss)DNA is stabiized in the filament's interior. The ATP-DnaA-oriC complex binds and stabilizes one strand of the AT-rich DNA unwinding element (DUE), permitting loading of DNA polymerase. After initiation quickly degrades to an ADP-DnaA complex that is not apt for DNA replication. Binds acidic phospholipids. The chain is Chromosomal replication initiator protein DnaA from Mycoplasma mycoides.